We begin with the raw amino-acid sequence, 89 residues long: Small ribosomal subunit protein uS15 (89 aa).

This sequence belongs to the universal ribosomal protein uS15 family. Part of the 30S ribosomal subunit. Forms a bridge to the 50S subunit in the 70S ribosome, contacting the 23S rRNA.

In terms of biological role, one of the primary rRNA binding proteins, it binds directly to 16S rRNA where it helps nucleate assembly of the platform of the 30S subunit by binding and bridging several RNA helices of the 16S rRNA. Functionally, forms an intersubunit bridge (bridge B4) with the 23S rRNA of the 50S subunit in the ribosome. This Leuconostoc citreum (strain KM20) protein is Small ribosomal subunit protein uS15.